The following is a 278-amino-acid chain: Large ribosomal subunit protein uL2 (278 aa).

The interval 224–278 is disordered; sequence VAMNPVDHPHGGGEGRTSGGRNPVTPWGVPTKGKKTRSNKRTDTFILSSRHNRKK.

It belongs to the universal ribosomal protein uL2 family. In terms of assembly, part of the 50S ribosomal subunit. Forms a bridge to the 30S subunit in the 70S ribosome.

Its function is as follows. One of the primary rRNA binding proteins. Required for association of the 30S and 50S subunits to form the 70S ribosome, for tRNA binding and peptide bond formation. It has been suggested to have peptidyltransferase activity; this is somewhat controversial. Makes several contacts with the 16S rRNA in the 70S ribosome. The chain is Large ribosomal subunit protein uL2 from Methylorubrum extorquens (strain CM4 / NCIMB 13688) (Methylobacterium extorquens).